The sequence spans 117 residues: DNA-directed RNA polymerase subunit omega (117 aa).

The protein belongs to the RNA polymerase subunit omega family. In terms of assembly, the RNAP catalytic core consists of 2 alpha, 1 beta, 1 beta' and 1 omega subunit. When a sigma factor is associated with the core the holoenzyme is formed, which can initiate transcription.

The enzyme catalyses RNA(n) + a ribonucleoside 5'-triphosphate = RNA(n+1) + diphosphate. Functionally, promotes RNA polymerase assembly. Latches the N- and C-terminal regions of the beta' subunit thereby facilitating its interaction with the beta and alpha subunits. The sequence is that of DNA-directed RNA polymerase subunit omega from Cereibacter sphaeroides (strain ATCC 17029 / ATH 2.4.9) (Rhodobacter sphaeroides).